The primary structure comprises 231 residues: Ribose-5-phosphate isomerase A (231 aa).

Residues 32-35, 85-88, and 98-101 contribute to the substrate site; these read TGST, DGAD, and KGGG. E107 acts as the Proton acceptor in catalysis. K125 lines the substrate pocket.

Belongs to the ribose 5-phosphate isomerase family. In terms of assembly, homodimer.

It carries out the reaction aldehydo-D-ribose 5-phosphate = D-ribulose 5-phosphate. It functions in the pathway carbohydrate degradation; pentose phosphate pathway; D-ribose 5-phosphate from D-ribulose 5-phosphate (non-oxidative stage): step 1/1. Catalyzes the reversible conversion of ribose-5-phosphate to ribulose 5-phosphate. The chain is Ribose-5-phosphate isomerase A from Burkholderia orbicola (strain MC0-3).